A 285-amino-acid polypeptide reads, in one-letter code: 1,4-dihydroxy-2-naphthoyl-CoA synthase (285 aa).

Residues arginine 45, 84 to 88 (AGGDQ), tyrosine 97, 129 to 133 (YSIGG), threonine 155, serine 161, tyrosine 258, and lysine 273 each bind substrate. Residue 154–156 (QTG) participates in hydrogencarbonate binding.

It belongs to the enoyl-CoA hydratase/isomerase family. MenB subfamily. Homohexamer. Hydrogencarbonate serves as cofactor.

It catalyses the reaction 2-succinylbenzoyl-CoA + H(+) = 1,4-dihydroxy-2-naphthoyl-CoA + H2O. It functions in the pathway quinol/quinone metabolism; 1,4-dihydroxy-2-naphthoate biosynthesis; 1,4-dihydroxy-2-naphthoate from chorismate: step 6/7. The protein operates within quinol/quinone metabolism; menaquinone biosynthesis. Its function is as follows. Converts o-succinylbenzoyl-CoA (OSB-CoA) to 1,4-dihydroxy-2-naphthoyl-CoA (DHNA-CoA). This Salmonella typhimurium (strain LT2 / SGSC1412 / ATCC 700720) protein is 1,4-dihydroxy-2-naphthoyl-CoA synthase.